Reading from the N-terminus, the 186-residue chain is Ribosome-recycling factor (186 aa).

This sequence belongs to the RRF family.

The protein resides in the cytoplasm. In terms of biological role, responsible for the release of ribosomes from messenger RNA at the termination of protein biosynthesis. May increase the efficiency of translation by recycling ribosomes from one round of translation to another. The protein is Ribosome-recycling factor of Coprothermobacter proteolyticus (strain ATCC 35245 / DSM 5265 / OCM 4 / BT).